Here is a 397-residue protein sequence, read N- to C-terminus: Acetate kinase (397 aa).

Asn8 provides a ligand contact to Mg(2+). Residue Lys15 participates in ATP binding. Arg89 serves as a coordination point for substrate. Asp146 (proton donor/acceptor) is an active-site residue. ATP contacts are provided by residues 206–210, 281–283, and 329–333; these read HLGNG, DLR, and GVGEN. Residue Glu382 participates in Mg(2+) binding.

Belongs to the acetokinase family. Homodimer. It depends on Mg(2+) as a cofactor. Mn(2+) serves as cofactor.

It localises to the cytoplasm. It catalyses the reaction acetate + ATP = acetyl phosphate + ADP. It functions in the pathway metabolic intermediate biosynthesis; acetyl-CoA biosynthesis; acetyl-CoA from acetate: step 1/2. In terms of biological role, catalyzes the formation of acetyl phosphate from acetate and ATP. Can also catalyze the reverse reaction. The sequence is that of Acetate kinase from Bacillus cereus (strain ATCC 14579 / DSM 31 / CCUG 7414 / JCM 2152 / NBRC 15305 / NCIMB 9373 / NCTC 2599 / NRRL B-3711).